A 481-amino-acid chain; its full sequence is Aspartyl/glutamyl-tRNA(Asn/Gln) amidotransferase subunit B (481 aa).

It belongs to the GatB/GatE family. GatB subfamily. Heterotrimer of A, B and C subunits.

The catalysed reaction is L-glutamyl-tRNA(Gln) + L-glutamine + ATP + H2O = L-glutaminyl-tRNA(Gln) + L-glutamate + ADP + phosphate + H(+). It carries out the reaction L-aspartyl-tRNA(Asn) + L-glutamine + ATP + H2O = L-asparaginyl-tRNA(Asn) + L-glutamate + ADP + phosphate + 2 H(+). Functionally, allows the formation of correctly charged Asn-tRNA(Asn) or Gln-tRNA(Gln) through the transamidation of misacylated Asp-tRNA(Asn) or Glu-tRNA(Gln) in organisms which lack either or both of asparaginyl-tRNA or glutaminyl-tRNA synthetases. The reaction takes place in the presence of glutamine and ATP through an activated phospho-Asp-tRNA(Asn) or phospho-Glu-tRNA(Gln). The protein is Aspartyl/glutamyl-tRNA(Asn/Gln) amidotransferase subunit B of Pseudomonas putida (strain W619).